The chain runs to 258 residues: ATP synthase subunit a (258 aa).

6 helical membrane-spanning segments follow: residues 30–50, 85–105, 122–142, 151–171, 198–218, and 230–250; these read SSYF…VAMS, FFPF…LGMF, LIVT…YGVF, LFVP…IEII, FAGF…LAGI, and LEFL…CIYL.

Belongs to the ATPase A chain family. As to quaternary structure, F-type ATPases have 2 components, CF(1) - the catalytic core - and CF(0) - the membrane proton channel. CF(1) has five subunits: alpha(3), beta(3), gamma(1), delta(1), epsilon(1). CF(0) has three main subunits: a(1), b(2) and c(9-12). The alpha and beta chains form an alternating ring which encloses part of the gamma chain. CF(1) is attached to CF(0) by a central stalk formed by the gamma and epsilon chains, while a peripheral stalk is formed by the delta and b chains.

The protein localises to the cell inner membrane. In terms of biological role, key component of the proton channel; it plays a direct role in the translocation of protons across the membrane. The polypeptide is ATP synthase subunit a (Maricaulis maris (strain MCS10) (Caulobacter maris)).